The following is a 127-amino-acid chain: Glycine cleavage system H protein (127 aa).

The region spanning T27–K109 is the Lipoyl-binding domain. At K68 the chain carries N6-lipoyllysine.

This sequence belongs to the GcvH family. As to quaternary structure, the glycine cleavage system is composed of four proteins: P, T, L and H. The cofactor is (R)-lipoate.

Functionally, the glycine cleavage system catalyzes the degradation of glycine. The H protein shuttles the methylamine group of glycine from the P protein to the T protein. In Corynebacterium jeikeium (strain K411), this protein is Glycine cleavage system H protein.